We begin with the raw amino-acid sequence, 248 residues long: MAPARKFFVGGNWKMNGRKNNLGELINTLNAAKLPADTEVVCAPPTAYIDFARQKLDPKIAVAAQNCYKVANGAFTGEIGPGMIKDLGATWVVLGHSERRHVFGESDELIGQKVAHALAEGLGVIACIGEKLDEREAGITEKVVFEQTKVIADNVKDWNKVVLAYEPVWAIGTGKTATPQQAQEVHEKLRGWLKTHVPEAVAHSTRIIYGGSVTGATCKELASQPDVDGFRVSGASLKPEFVDIINAK.

Substrate contacts are provided by N12 and K14. K14 carries the post-translational modification N6-acetyllysine. Y68 bears the 3'-nitrotyrosine mark. The active-site Electrophile is the H96. S106 carries the phosphoserine modification. Residue K142 forms a Glycyl lysine isopeptide (Lys-Gly) (interchain with G-Cter in SUMO1) linkage. Position 149 is an N6-succinyllysine (K149). An N6-acetyllysine; alternate modification is found at K156. Residue K156 is modified to N6-succinyllysine; alternate. E166 functions as the Proton acceptor in the catalytic mechanism. T173 carries the phosphothreonine modification. N6-acetyllysine; alternate is present on K194. The residue at position 194 (K194) is an N6-succinyllysine; alternate. K194 carries the N6-methyllysine; alternate modification. The residue at position 209 (Y209) is a 3'-nitrotyrosine. Phosphoserine is present on S212. T214 carries the post-translational modification Phosphothreonine. At S223 the chain carries Phosphoserine. Residue K238 is modified to N6-acetyllysine.

This sequence belongs to the triosephosphate isomerase family. As to quaternary structure, homodimer.

It is found in the cytoplasm. The catalysed reaction is dihydroxyacetone phosphate = methylglyoxal + phosphate. It carries out the reaction D-glyceraldehyde 3-phosphate = dihydroxyacetone phosphate. It participates in carbohydrate degradation; glycolysis; D-glyceraldehyde 3-phosphate from glycerone phosphate: step 1/1. It functions in the pathway carbohydrate biosynthesis; gluconeogenesis. Its function is as follows. Triosephosphate isomerase is an extremely efficient metabolic enzyme that catalyzes the interconversion between dihydroxyacetone phosphate (DHAP) and D-glyceraldehyde-3-phosphate (G3P) in glycolysis and gluconeogenesis. It is also responsible for the non-negligible production of methylglyoxal a reactive cytotoxic side-product that modifies and can alter proteins, DNA and lipids. This chain is Triosephosphate isomerase (TPI1), found in Sus scrofa (Pig).